A 366-amino-acid chain; its full sequence is Chorismate synthase (366 aa).

2 residues coordinate NADP(+): arginine 48 and arginine 54. Residues arginine 125–serine 127, asparagine 238–alanine 239, glycine 278, lysine 293–serine 297, and arginine 319 contribute to the FMN site.

Belongs to the chorismate synthase family. As to quaternary structure, homotetramer. It depends on FMNH2 as a cofactor.

It carries out the reaction 5-O-(1-carboxyvinyl)-3-phosphoshikimate = chorismate + phosphate. Its pathway is metabolic intermediate biosynthesis; chorismate biosynthesis; chorismate from D-erythrose 4-phosphate and phosphoenolpyruvate: step 7/7. Its function is as follows. Catalyzes the anti-1,4-elimination of the C-3 phosphate and the C-6 proR hydrogen from 5-enolpyruvylshikimate-3-phosphate (EPSP) to yield chorismate, which is the branch point compound that serves as the starting substrate for the three terminal pathways of aromatic amino acid biosynthesis. This reaction introduces a second double bond into the aromatic ring system. The sequence is that of Chorismate synthase from Paraburkholderia phymatum (strain DSM 17167 / CIP 108236 / LMG 21445 / STM815) (Burkholderia phymatum).